Here is a 207-residue protein sequence, read N- to C-terminus: MDFLFYIFSSLTLISGSLVIQARNPVHSVLFLVLVFFNAAGLLVLLGLDFFALIFLVVYVGAIAVLFLFVVMMLNIRITEISEKRLRYLPVGGVLGVLFLFEICILIDNDCIPLLSYDIENTALLANYNQLSFIDWRMYLSTSHTIDALGSLLYTYYFYFFLVASLILLVAMIGAIVLTMQKGIRIKRQQVFLQNTRDFAKTIRKVA.

5 helical membrane passes run 1 to 21, 28 to 48, 50 to 70, 88 to 108, and 158 to 178; these read MDFL…LVIQ, SVLF…LLGL, FFAL…FLFV, YLPV…ILID, and FYFF…AIVL.

The protein belongs to the complex I subunit 6 family.

It is found in the mitochondrion membrane. The enzyme catalyses a ubiquinone + NADH + 5 H(+)(in) = a ubiquinol + NAD(+) + 4 H(+)(out). Its function is as follows. Core subunit of the mitochondrial membrane respiratory chain NADH dehydrogenase (Complex I) that is believed to belong to the minimal assembly required for catalysis. Complex I functions in the transfer of electrons from NADH to the respiratory chain. The immediate electron acceptor for the enzyme is believed to be ubiquinone. The polypeptide is NADH-ubiquinone oxidoreductase chain 6 (ND6) (Prototheca wickerhamii).